A 234-amino-acid polypeptide reads, in one-letter code: Proteasome subunit alpha type-2 (234 aa).

The residue at position 2 (alanine 2) is an N-acetylalanine. Tyrosine 121 is subject to Phosphotyrosine.

Belongs to the peptidase T1A family. In terms of assembly, the 26S proteasome consists of a 20S proteasome core and two 19S regulatory subunits. The 20S proteasome core is composed of 28 subunits that are arranged in four stacked rings, resulting in a barrel-shaped structure. The two end rings are each formed by seven alpha subunits, and the two central rings are each formed by seven beta subunits. The catalytic chamber with the active sites is on the inside of the barrel.

Its subcellular location is the cytoplasm. The protein resides in the nucleus. In terms of biological role, the proteasome is a multicatalytic proteinase complex which is characterized by its ability to cleave peptides with Arg, Phe, Tyr, Leu, and Glu adjacent to the leaving group at neutral or slightly basic pH. The proteasome has an ATP-dependent proteolytic activity. PSMA2 may have a potential regulatory effect on another component(s) of the proteasome complex through tyrosine phosphorylation. The chain is Proteasome subunit alpha type-2 (psma2) from Carassius auratus (Goldfish).